We begin with the raw amino-acid sequence, 253 residues long: BRI3-binding protein (253 aa).

4 helical membrane-spanning segments follow: residues 19–39, 131–151, 164–181, and 190–210; these read VLLPVLLLALLLLALVAPGAQ, ALVLVGVVLLAYWFLSLTLGF, FWLVRVILFSMSCVYILH, and AVLPLCVVVAIYFMTGPMGYW. Residues 219-253 are a coiled coil; sequence SPSVEEKLEHLENQVRLLNIRLNRVLENLDRSKDK. Phosphoserine is present on serine 250.

In terms of assembly, interacts with LETMD1. Interacts with BRI3. Interacts with BRI3; the interaction is weak. Interacts with TMEM238L.

The protein resides in the mitochondrion outer membrane. Involved in tumorigenesis and may function by stabilizing p53/TP53. The sequence is that of BRI3-binding protein from Mus musculus (Mouse).